Here is a 95-residue protein sequence, read N- to C-terminus: MTKGTGSFGKRRNKSHTLCVRCGRRSFHIQKSRCSACAYPAARKRTYNWSVKAIRRKTTGTGRMRYLRNVPRRFKTGFREGTEAKPRNKGVASSA.

Zn(2+)-binding residues include C19, C22, C34, and C37. A C4-type zinc finger spans residues 19–37 (CVRCGRRSFHIQKSRCSAC).

Belongs to the eukaryotic ribosomal protein eL37 family. It depends on Zn(2+) as a cofactor.

In terms of biological role, binds to the 23S rRNA. The sequence is that of Large ribosomal subunit protein eL37y (RPL37B) from Arabidopsis thaliana (Mouse-ear cress).